Here is a 370-residue protein sequence, read N- to C-terminus: MQQDKVNLLGLNQKAIEDFFISIGKKKFHARQVFKWIHKKGVIDFDAMTDLGKNLRHKLKDKAQITIPKVVFSKASKDGTHKWLIDVGGSAVETVFIPEEGRGTLCVSSQIGCTLNCSFCSTGKQGFNRNLSAAEVIAQLWIAARTLSKTDGEHDFTVTNIVMMGMGEPLMNFENVVPAMDIMMDDLAYGLSRRKVTLSTSGVVPRIYDLLEQSGVSLAVSLHTPNDMLRNEIVPINKKYNIDELLEACKLYAQKGPHKHITFEYTLMEEVNDNLSDAEELVALLKSREVPAKINLIPFNPYPGTPYKKPSNNRIHRFKEFLQHNGFVTTVRKTRGDDIDAACGQLAGDVMDKTNRKQIYLKKLGDTNAN.

The active-site Proton acceptor is the Glu93. The Radical SAM core domain maps to 99-337 (EEGRGTLCVS…VTTVRKTRGD (239 aa)). Cys106 and Cys343 are oxidised to a cystine. Residues Cys113, Cys117, and Cys120 each contribute to the [4Fe-4S] cluster site. S-adenosyl-L-methionine contacts are provided by residues 167–168 (GE), Ser199, 221–223 (SLH), and Asn300. Cys343 functions as the S-methylcysteine intermediate in the catalytic mechanism.

This sequence belongs to the radical SAM superfamily. RlmN family. [4Fe-4S] cluster is required as a cofactor.

It localises to the cytoplasm. The catalysed reaction is adenosine(2503) in 23S rRNA + 2 reduced [2Fe-2S]-[ferredoxin] + 2 S-adenosyl-L-methionine = 2-methyladenosine(2503) in 23S rRNA + 5'-deoxyadenosine + L-methionine + 2 oxidized [2Fe-2S]-[ferredoxin] + S-adenosyl-L-homocysteine. The enzyme catalyses adenosine(37) in tRNA + 2 reduced [2Fe-2S]-[ferredoxin] + 2 S-adenosyl-L-methionine = 2-methyladenosine(37) in tRNA + 5'-deoxyadenosine + L-methionine + 2 oxidized [2Fe-2S]-[ferredoxin] + S-adenosyl-L-homocysteine. In terms of biological role, specifically methylates position 2 of adenine 2503 in 23S rRNA and position 2 of adenine 37 in tRNAs. m2A2503 modification seems to play a crucial role in the proofreading step occurring at the peptidyl transferase center and thus would serve to optimize ribosomal fidelity. In Francisella tularensis subsp. holarctica (strain FTNF002-00 / FTA), this protein is Dual-specificity RNA methyltransferase RlmN.